Here is a 449-residue protein sequence, read N- to C-terminus: N-succinylarginine dihydrolase (449 aa).

Substrate-binding positions include 19 to 28 (GGLSYGNVAS), N110, and 137 to 138 (HR). The interval 23–43 (YGNVASQSNSQQASNPREAAR) is disordered. The span at 27 to 37 (ASQSNSQQASN) shows a compositional bias: low complexity. Residue E174 is part of the active site. R214 contributes to the substrate binding site. Residue H250 is part of the active site. Substrate-binding residues include D252 and N365. C371 (nucleophile) is an active-site residue.

It belongs to the succinylarginine dihydrolase family. Homodimer.

It carries out the reaction N(2)-succinyl-L-arginine + 2 H2O + 2 H(+) = N(2)-succinyl-L-ornithine + 2 NH4(+) + CO2. It participates in amino-acid degradation; L-arginine degradation via AST pathway; L-glutamate and succinate from L-arginine: step 2/5. In terms of biological role, catalyzes the hydrolysis of N(2)-succinylarginine into N(2)-succinylornithine, ammonia and CO(2). In Pseudomonas putida (strain ATCC 47054 / DSM 6125 / CFBP 8728 / NCIMB 11950 / KT2440), this protein is N-succinylarginine dihydrolase.